Reading from the N-terminus, the 526-residue chain is Protein spinster homolog 1 (526 aa).

The segment at methionine 1–glycine 44 is disordered. 12 helical membrane passes run valine 59 to valine 79, glycine 98 to leucine 118, leucine 126 to serine 146, leucine 159 to phenylalanine 179, methionine 187 to serine 207, tryptophan 218 to alanine 238, phenylalanine 272 to tryptophan 292, methionine 321 to isoleucine 341, leucine 355 to alanine 375, valine 384 to leucine 404, leucine 419 to isoleucine 439, and methionine 463 to isoleucine 483.

The protein belongs to the major facilitator superfamily. Spinster (TC 2.A.1.49) family.

It localises to the lysosome membrane. It carries out the reaction a 1-acyl-sn-glycero-3-phosphocholine(out) + H(+)(out) = a 1-acyl-sn-glycero-3-phosphocholine(in) + H(+)(in). The enzyme catalyses a 1-acyl-sn-glycero-3-phosphoethanolamine(out) + H(+)(out) = a 1-acyl-sn-glycero-3-phosphoethanolamine(in) + H(+)(in). The catalysed reaction is a 1-O-(1Z-alkenyl)-sn-glycero-3-phosphocholine(out) + H(+)(out) = a 1-O-(1Z-alkenyl)-sn-glycero-3-phosphocholine(in) + H(+)(in). It catalyses the reaction a 1-O-(1Z-alkenyl)-sn-glycero-3-phosphoethanolamine(out) + H(+)(out) = a 1-O-(1Z-alkenyl)-sn-glycero-3-phosphoethanolamine(in) + H(+)(in). In terms of biological role, mediates the rate-limiting, proton-dependent, lysosomal efflux of lysophospholipids. Selective for zwitterionic headgroups such as lysophosphatidylcholine (LPC) and lysophosphatidylethanolamine (LPE). Essential player in lysosomal homeostasis. This chain is Protein spinster homolog 1 (spns1), found in Xenopus laevis (African clawed frog).